Here is a 444-residue protein sequence, read N- to C-terminus: Tubulin beta-2 chain (444 aa).

Residues Gln11, Glu69, Ser138, Gly142, Thr143, Gly144, Asn204, and Asn226 each coordinate GTP. Glu69 contributes to the Mg(2+) binding site. The interval 422 to 444 (YQQYQDATAEEDDYDDGEGSTGD) is disordered. The span at 429 to 444 (TAEEDDYDDGEGSTGD) shows a compositional bias: acidic residues.

Belongs to the tubulin family. In terms of assembly, dimer of alpha and beta chains. A typical microtubule is a hollow water-filled tube with an outer diameter of 25 nm and an inner diameter of 15 nM. Alpha-beta heterodimers associate head-to-tail to form protofilaments running lengthwise along the microtubule wall with the beta-tubulin subunit facing the microtubule plus end conferring a structural polarity. Microtubules usually have 13 protofilaments but different protofilament numbers can be found in some organisms and specialized cells. Mg(2+) is required as a cofactor. As to expression, found in areas of rapidly dividing tissues.

It localises to the cytoplasm. Its subcellular location is the cytoskeleton. Tubulin is the major constituent of microtubules, a cylinder consisting of laterally associated linear protofilaments composed of alpha- and beta-tubulin heterodimers. Microtubules grow by the addition of GTP-tubulin dimers to the microtubule end, where a stabilizing cap forms. Below the cap, tubulin dimers are in GDP-bound state, owing to GTPase activity of alpha-tubulin. This Daucus carota (Wild carrot) protein is Tubulin beta-2 chain (TUBB2).